A 105-amino-acid chain; its full sequence is Acylphosphatase (105 aa).

The Acylphosphatase-like domain occupies 16 to 105 (RLTAWVRGRV…RGGYSGFTQA (90 aa)). Active-site residues include Arg31 and Asn49.

Belongs to the acylphosphatase family.

It carries out the reaction an acyl phosphate + H2O = a carboxylate + phosphate + H(+). The chain is Acylphosphatase (acyP) from Acidothermus cellulolyticus (strain ATCC 43068 / DSM 8971 / 11B).